Reading from the N-terminus, the 283-residue chain is Foldase protein PrsA 3 (283 aa).

Positions 1 to 21 (MKKKKIFIGTIISCVMLALSA) are cleaved as a signal peptide. Cysteine 22 is lipidated: N-palmitoyl cysteine. Cysteine 22 is lipidated: S-diacylglycerol cysteine. One can recognise a PpiC domain in the interval 132-222 (KPEMKVSHIL…YGYHIIKVTD (91 aa)).

Belongs to the PrsA family.

Its subcellular location is the cell membrane. It catalyses the reaction [protein]-peptidylproline (omega=180) = [protein]-peptidylproline (omega=0). Its function is as follows. Plays a major role in protein secretion by helping the post-translocational extracellular folding of several secreted proteins. This is Foldase protein PrsA 3 (prsA3) from Bacillus cereus (strain ATCC 14579 / DSM 31 / CCUG 7414 / JCM 2152 / NBRC 15305 / NCIMB 9373 / NCTC 2599 / NRRL B-3711).